The sequence spans 290 residues: ADP-ribosylation factor-like protein 13A (290 aa).

GTP contacts are provided by residues 28-35 (GLNNSGKT), 71-75 (DLNGD), and 130-133 (NKQD). Positions 204–226 (SKNNTGSGERCSSHSFSTRTGMS) are disordered.

This sequence belongs to the small GTPase superfamily. Arf family.

The chain is ADP-ribosylation factor-like protein 13A (ARL13A) from Homo sapiens (Human).